We begin with the raw amino-acid sequence, 487 residues long: Betaine aldehyde dehydrogenase (487 aa).

K(+) contacts are provided by I27 and D93. Residue 149–151 (GAW) participates in NAD(+) binding. Catalysis depends on K161, which acts as the Charge relay system. NAD(+) is bound by residues 175 to 178 (KPSE) and 228 to 231 (SVPT). The active-site Proton acceptor is the E249. NAD(+) is bound by residues G251, C283, and E384. The active-site Nucleophile is the C283. A Cysteine sulfenic acid (-SOH) modification is found at C283. Residues K454 and G457 each coordinate K(+). Residue E461 is the Charge relay system of the active site.

Belongs to the aldehyde dehydrogenase family. As to quaternary structure, dimer of dimers. It depends on K(+) as a cofactor.

The enzyme catalyses betaine aldehyde + NAD(+) + H2O = glycine betaine + NADH + 2 H(+). Its pathway is amine and polyamine biosynthesis; betaine biosynthesis via choline pathway; betaine from betaine aldehyde: step 1/1. Involved in the biosynthesis of the osmoprotectant glycine betaine. Catalyzes the irreversible oxidation of betaine aldehyde to the corresponding acid. The protein is Betaine aldehyde dehydrogenase of Mesorhizobium japonicum (strain LMG 29417 / CECT 9101 / MAFF 303099) (Mesorhizobium loti (strain MAFF 303099)).